We begin with the raw amino-acid sequence, 822 residues long: MNGHMSNHSSGYGIYPSQMNGYGSSPPYSQMDREHCSRTSAKALYEQRKNYARDSVSSVSDVSQYRVEHLTTFVLDRKDAMITVDDGIRKLKLLDAKGKVWTQDMILQVDDRAVSLIDLESKNELENFPLNTIQHCQAVAHTCSYDSILALVCKEPTQNKPDLHLFQCDEVKANLISEDIESAISDSKGGKQKRRPEALRMIAKADPGIPPPPRAPAPVPPGTVTQVDVRSRVAAWSAWAADQGDFEKPRQYHEQEETPEMMAARIDRDVQILNHILDDIEFFITKLQKAAEAFSELSKRKKSKKSKRKGPGEGVLTLRAKPPPPDEFVDCFQKFKHGFNLLAKLKSHIQNPSASDLVHFLFTPLNMVVQATGGPELASSVLSPLLTKDTVDFLNYTVKAEERQLWMSLGETWMKVRAEWPKEQFIPPYVPRFRNGWEPPMLNFMGAPTEQDMYQLAESVANAAEQQRKQDSKRQSTEHSSMSDYPPADGYTFSNSMYHRGPHVDQGEAALALKSTPNRHVDRNYDPVKTQPKKYAKSKYDFVARNSSELSVMKDDVLEILDDRKQWWKVRNASGDSGFVPNNILDIMRTPESGVGRTDPPYTHTIQKQRTEYGPRSADTPSAPSPPPTPAPVPVPLPPSAPAPVPVPKVPANVTRQNSSSSESGGSIARDSQRYKQLPVDRRKSQMEEVQDELFQRLTIGRSAAQRKFHVPRQNVPVINITYDSSPEEVKTWLQSKGFNPVTVSSLGVLNGAQLFSLNKDELRSVCPEGARVFSQITVQKAALEDSSGSSELQEIMRRRQEKISAAASDSGVESFDEGSSH.

A Phosphoserine modification is found at Ser58. One can recognise a PTB domain in the interval 64 to 194 (QYRVEHLTTF…SDSKGGKQKR (131 aa)). Disordered stretches follow at residues 204–224 (KADP…PGTV), 295–320 (SELS…TLRA), and 460–487 (VANA…DYPP). The span at 208–221 (GIPPPPRAPAPVPP) shows a compositional bias: pro residues. A Phosphothreonine modification is found at Thr223. A compositionally biased stretch (basic residues) spans 299–309 (KRKKSKKSKRK). Thr317 is subject to Phosphothreonine. The segment covering 466-477 (QQRKQDSKRQST) has biased composition (basic and acidic residues). At Ser476 the chain carries Phosphoserine. One can recognise an SH3 domain in the interval 531–590 (QPKKYAKSKYDFVARNSSELSVMKDDVLEILDDRKQWWKVRNASGDSGFVPNNILDIMRT). The disordered stretch occupies residues 608–685 (KQRTEYGPRS…KQLPVDRRKS (78 aa)). Over residues 623–649 (APSPPPTPAPVPVPLPPSAPAPVPVPK) the composition is skewed to pro residues. A Phosphoserine; by MAPK modification is found at Ser625. Phosphothreonine; by MAPK is present on Thr629. Residues 649–822 (KVPANVTRQN…VESFDEGSSH (174 aa)) form an effector region region. Phosphoserine is present on residues Ser659, Ser662, and Ser685. The span at 671-685 (DSQRYKQLPVDRRKS) shows a compositional bias: basic and acidic residues. Positions 680 to 698 (VDRRKSQMEEVQDELFQRL) are amphipathic helix. Helix bundle stretches follow at residues 718 to 738 (VINI…QSKG), 752 to 757 (GAQLFS), 762 to 767 (ELRSVC), and 766 to 785 (VCPE…AALE). Residues 787–822 (SSGSSELQEIMRRRQEKISAAASDSGVESFDEGSSH) form a disordered region. Residues Ser811 and Ser815 each carry the phosphoserine modification.

This sequence belongs to the EPS8 family. As to quaternary structure, homodimer. Part of a complex consisting of ABI1, EPS8 and SOS1. Interacts with BAIAP2. Interacts with SHB and LANCL1. Interacts with EGFR; mediates EPS8 phosphorylation. Interacts with MYO15A and WHRN. Ubiquitinated by the SCF(FBXW5) E3 ubiquitin-protein ligase complex during G2 phase, leading to its transient degradation and subsequent cell shape changes required to allow mitotic progression. Reappears at the midzone of dividing cells. In terms of processing, phosphorylation at Ser-625 and Thr-629 by MAPK following BDNF treatment promotes removal from actin and filopodia formation. Phosphorylated by several receptor tyrosine kinases. Expressed in neuronal cell body and neurites, and prominently enriched in the axonal growth cone.

The protein resides in the synapse. It is found in the synaptosome. It localises to the cytoplasm. The protein localises to the cell cortex. Its subcellular location is the cell projection. The protein resides in the ruffle membrane. It is found in the stereocilium. It localises to the growth cone. Its function is as follows. Signaling adapter that controls various cellular protrusions by regulating actin cytoskeleton dynamics and architecture. Depending on its association with other signal transducers, can regulate different processes. Together with SOS1 and ABI1, forms a trimeric complex that participates in transduction of signals from Ras to Rac by activating the Rac-specific guanine nucleotide exchange factor (GEF) activity. Acts as a direct regulator of actin dynamics by binding actin filaments and has both barbed-end actin filament capping and actin bundling activities depending on the context. Displays barbed-end actin capping activity when associated with ABI1, thereby regulating actin-based motility process: capping activity is auto-inhibited and inhibition is relieved upon ABI1 interaction. Also shows actin bundling activity when associated with BAIAP2, enhancing BAIAP2-dependent membrane extensions and promoting filopodial protrusions. Involved in the regulation of processes such as axonal filopodia growth, stereocilia length, dendritic cell migration and cancer cell migration and invasion. Acts as a regulator of axonal filopodia formation in neurons: in the absence of neurotrophic factors, negatively regulates axonal filopodia formation via actin-capping activity. In contrast, it is phosphorylated in the presence of BDNF leading to inhibition of its actin-capping activity and stimulation of filopodia formation. Component of a complex with WHRN and MYO15A that localizes at stereocilia tips and is required for elongation of the stereocilia actin core. Indirectly involved in cell cycle progression; its degradation following ubiquitination being required during G2 phase to promote cell shape changes. The protein is Epidermal growth factor receptor kinase substrate 8 (Eps8) of Rattus norvegicus (Rat).